A 104-amino-acid polypeptide reads, in one-letter code: DNA-directed RNA polymerase subunit omega (104 aa).

The tract at residues 76–104 is disordered; sequence IEEEKRRKEEEEKKIKEQIAKEKEDGEKI.

Belongs to the RNA polymerase subunit omega family. The RNAP catalytic core consists of 2 alpha, 1 beta, 1 beta' and 1 omega subunit. When a sigma factor is associated with the core the holoenzyme is formed, which can initiate transcription.

It catalyses the reaction RNA(n) + a ribonucleoside 5'-triphosphate = RNA(n+1) + diphosphate. Functionally, promotes RNA polymerase assembly. Latches the N- and C-terminal regions of the beta' subunit thereby facilitating its interaction with the beta and alpha subunits. This chain is DNA-directed RNA polymerase subunit omega, found in Streptococcus pneumoniae (strain CGSP14).